Consider the following 365-residue polypeptide: Transcription factor MYB93 (365 aa).

2 consecutive HTH myb-type domains span residues 9 to 61 (ENGL…TNYL) and 62 to 116 (RPDI…KKKL). 2 consecutive DNA-binding regions (H-T-H motif) follow at residues 37 to 61 (WRALPKLADLNRCGKSCRLRWTNYL) and 89 to 112 (WSAIATHLQGRTDNEIKNFWNTHL).

In terms of assembly, interacts with FBX5.

It localises to the nucleus. Its subcellular location is the cytoplasm. Functionally, transcription factor that acts as a negative regulator of lateral root (LR) development. Required for normal auxin responses during LR development. May be part of a negative feedback loop stimulated specifically in the endodermis upon LR initiation to ensure that LRs are formed only in the correct place. In Arabidopsis thaliana (Mouse-ear cress), this protein is Transcription factor MYB93.